Here is a 944-residue protein sequence, read N- to C-terminus: Nonsense-mediated mRNA decay factor SMG8 (944 aa).

Disordered regions lie at residues 560–597 (NTGK…QNTA) and 628–653 (QASS…DTEN). Positions 568–583 (QDEDAGEDEAEEEEGQ) are enriched in acidic residues. Residues 628–650 (QASSEQLSNSEQNTTSSGTSSAD) are compositionally biased toward polar residues.

It belongs to the SMG8 family.

In terms of biological role, involved in nonsense-mediated decay (NMD) of mRNAs containing premature stop codons. Probable component of kinase complex containing nonC and recruited to stalled ribosomes. The polypeptide is Nonsense-mediated mRNA decay factor SMG8 (Drosophila simulans (Fruit fly)).